We begin with the raw amino-acid sequence, 464 residues long: MSPPSVLLLHSRIPLQPRPFRMNSRAAPSRVVVCSVASTEGFISAAPILLPDGPWKQVEGGVTAAKGFKAAGIYSGLRAKGEKPDLALVACDVDATVAGAFTTNVVAAAPVLYCKHVLSTSKTGRAVLINAGQANAATGDLGYQDAVDSADAVAKLLNVSTDNILIQSTGVIGQRIKKEALLNSLPRLVGSLSSSVQGANSAAVAITTTDLVSKSIAVQTEIGGVAIRIGGMAKGSGMIHPNMATMLGVLTTDAQVSSDVWREMIRMSVSRSFNQITVDGDTSTNDCVIAMASGLSGLSGIQSLDSIEAQQFQACLDAVMQSLAKSIAWDGEGATCLIEVTVSGANNEAEAAKIARSVASSSLVKAAIFGRDPNWGRIACSVGYSGIQFDANRLDISLGVIPLMKNGQPLPFDRLTASKYLKDAGDAHGTVNIDISVGSGGGNGKAWGCDLSYKYVEINAEYTT.

Positions 208, 234, 245, 332, 459, and 464 each coordinate substrate. Residue threonine 245 is the Nucleophile of the active site.

Belongs to the ArgJ family. In terms of assembly, heterodimer of an alpha and a beta chain.

It localises to the plastid. The protein resides in the chloroplast. It carries out the reaction N(2)-acetyl-L-ornithine + L-glutamate = N-acetyl-L-glutamate + L-ornithine. The enzyme catalyses L-glutamate + acetyl-CoA = N-acetyl-L-glutamate + CoA + H(+). It participates in amino-acid biosynthesis; L-arginine biosynthesis; L-ornithine and N-acetyl-L-glutamate from L-glutamate and N(2)-acetyl-L-ornithine (cyclic): step 1/1. It functions in the pathway amino-acid biosynthesis; L-arginine biosynthesis; N(2)-acetyl-L-ornithine from L-glutamate: step 1/4. Functionally, catalyzes two activities which are involved in the cyclic version of arginine biosynthesis: the synthesis of acetylglutamate from glutamate and acetyl-CoA, and of ornithine by transacetylation between acetylornithine and glutamate. The chain is Arginine biosynthesis bifunctional protein ArgJ, chloroplastic from Zea mays (Maize).